Here is a 228-residue protein sequence, read N- to C-terminus: FCS-Like Zinc finger 12 (228 aa).

Residues Asp162–Glu205 form an FLZ-type zinc finger.

The protein belongs to the FLZ family. Interacts with KIN10 and KIN11 via its FLZ-type zinc finger domain. Interacts with KINB1 and KINB2 via its N-terminal part. Forms homodimer and heterodimer with FLZ2 and FLZ10 in vitro.

Functionally, may act as an adapter to facilitate the interaction of SnRK1 complex with effector proteins, conferring tissue- and stimulus-type specific differences in the SnRK1 regulation pathway. In Arabidopsis thaliana (Mouse-ear cress), this protein is FCS-Like Zinc finger 12.